The sequence spans 505 residues: MEKLKKNKKKLIWQQRFLYPLLFQNDFYALAYNHSLNKFNLKKIENSNLNKHFSFLTLKRLVKRIRRKRNIEELNKNYNKIFDINYNNYFYSKVIREGLAIILENFFLVQSKKKIVKKFTEWTNYQSIHTVFPFIEDNFLHSNYILNTKIPSLIHPELLIRILRRRIQDASFSHLLRLIFHKNKKLVTLNIFSQREITKLSIFLWHSYIYELEFFLVNQWKTLNYFKSLSYLISLNKTYCITKIQHVIKKPLDIKLQFFYKKKMSFHYVRYENHFIIAIKNSNFLAEKWKFFFYKFWQYYFYYLFKLSRINLKKISKNCFSFLGYVFGIQTKSIIVKSNMIHTLSKINISRKEIYSITPISSLIELLAKENFCDTLGHPISKLAWTTLTDDEIFNRFDQIWRNFFYYYSGCKNKKNLYQVQYILRFSCAKTLACKHKSTIRYVWKKYGSNFFAKSFFFKKQELISLKFFKLYPSIKKIWYLNILQINALAKLLQKKILKTNRLNI.

Belongs to the intron maturase 2 family. MatK subfamily.

Its subcellular location is the plastid. It localises to the chloroplast. Functionally, usually encoded in the trnK tRNA gene intron. Probably assists in splicing its own and other chloroplast group II introns. The chain is Maturase K from Physcomitrium patens (Spreading-leaved earth moss).